Consider the following 496-residue polypeptide: Geranylhydroquinone 3''-hydroxylase CYP76B74 (496 aa).

Residues 3–23 (YTTILVGFLIGFVLFKALTRK) form a helical membrane-spanning segment. Cys436 is a binding site for heme.

Belongs to the cytochrome P450 family. The cofactor is heme.

It localises to the endoplasmic reticulum membrane. The catalysed reaction is (2E)-geranylhydroquinone + reduced [NADPH--hemoprotein reductase] + O2 = (2Z)-3''-hydroxygeranylhydroquinone + oxidized [NADPH--hemoprotein reductase] + H2O + H(+). In terms of biological role, hydroxylase involved in the biosynthesis pathway of the red naphthoquinone pigment shikonin. Catalyzes the key step C-3''-hydroxylation of the prenylated phenolic intermediate geranylhydroquinone to form 3''-hydroxygeranylhydroquinone. This Arnebia euchroma (Pink arnebia) protein is Geranylhydroquinone 3''-hydroxylase CYP76B74.